Here is a 1204-residue protein sequence, read N- to C-terminus: TPR repeat-containing protein DDB_G0287999 (1204 aa).

The span at 32 to 48 shows a compositional bias: low complexity; the sequence is TTDTTTTTSTSTTTDTD. Residues 32 to 55 are disordered; it reads TTDTTTTTSTSTTTDTDTNSEKSN. TPR repeat units lie at residues 263-296, 379-412, and 583-617; these read SKGLLLMIEFYIKIGDIDSAFKFFEVNFKDYKDL, NDSNNIIKNSSSKLEFNDDCVSNYKKLVNFDQLY, and IQHFVETALIYLINDNSYQEAVKLYIYFLKEGSVT. The interval 360–387 is disordered; it reads QPPPQEQQLMDDDSNSNSNNDSNNIIKN. Over residues 374 to 387 the composition is skewed to low complexity; sequence NSNSNNDSNNIIKN. Disordered regions lie at residues 639 to 660 and 761 to 797; these read NNNNNNNNNNNNNNNNNNNNNN and DDNDNDNNNNNNNNNNNNNDDDDGGGHGGGDVFKTTT. Over residues 766 to 778 the composition is skewed to low complexity; that stretch reads DNNNNNNNNNNNN.

In Dictyostelium discoideum (Social amoeba), this protein is TPR repeat-containing protein DDB_G0287999.